The following is a 1321-amino-acid chain: Bile salt export pump (1321 aa).

Residues 1–62 (MSDSVILRSV…FSSSKDNWLM (62 aa)) lie on the Cytoplasmic side of the membrane. The 324-residue stretch at 62 to 385 (MFMGSVCALL…ASSCLEIFST (324 aa)) folds into the ABC transmembrane type-1 1 domain. The helical transmembrane segment at 63-83 (FMGSVCALLHGMAQPGMIIVF) threads the bilayer. The Extracellular portion of the chain corresponds to 84–147 (GILTDIFVEY…VIKFSGIYAG (64 aa)). N-linked (GlcNAc...) asparagine glycosylation is found at Asn-109, Asn-116, Asn-122, and Asn-125. Residues 148–168 (VGVAVLILGYFQIRLWVITGA) form a helical membrane-spanning segment. The Cytoplasmic portion of the chain corresponds to 169–215 (RQIRKMRKFYFRRIMRMEIGWFDCTSVGELNSRFSDDINKIDEAIAD). The helical transmembrane segment at 216-236 (QMALFLQRLSTALSGLLLGFY) threads the bilayer. Residues 237 to 240 (RGWK) lie on the Extracellular side of the membrane. The helical transmembrane segment at 241–261 (LTLVILAVSPLIGIGAAVIGL) threads the bilayer. The Cytoplasmic portion of the chain corresponds to 262-319 (SVAKFTELELKAYAKAGSIADEVLSSIRTVAAFGGENKEVERYEKNLMFAQRWGIWKG). Residues 320–340 (MVMGFFTGYMWCLIFFCYALA) form a helical membrane-spanning segment. The Extracellular portion of the chain corresponds to 341 to 353 (FWYGSRLVLDEGE). A helical membrane pass occupies residues 354–374 (YTPGTLIQIFLCVIIAAMNIG). Over 375 to 755 (NASSCLEIFS…KYNISEWPYI (381 aa)) the chain is Cytoplasmic. The ABC transporter 1 domain maps to 420–656 (IEFHNVTFHY…KGVYFMLVTL (237 aa)). 455-462 (GSSGAGKS) is an ATP binding site. The residue at position 586 (Thr-586) is a Phosphothreonine. Ser-587 bears the Phosphoserine mark. The interval 651–674 (FMLVTLQSQEDNTHKETGIKGKDT) is interaction with HAX1. Positions 662–684 (NTHKETGIKGKDTTEGDTPERTF) are enriched in basic and acidic residues. Positions 662 to 722 (NTHKETGIKG…PLAIGDHKSS (61 aa)) are disordered. Phosphoserine is present on residues Ser-692, Ser-703, and Ser-706. The region spanning 755-1043 (ILVGALCAAI…TFSYTPSYAK (289 aa)) is the ABC transmembrane type-1 2 domain. A helical membrane pass occupies residues 756 to 776 (LVGALCAAINGAVTPIYSLLF). At 777-794 (SQILKTFSLVDKEQQRSE) the chain is on the extracellular side. A helical membrane pass occupies residues 795 to 815 (IYSMCLFFVILGCVSLFTQFL). The Cytoplasmic portion of the chain corresponds to 816–869 (QGYNFAKSGELLTKRLRKFGFKAMLRQDIGWFDDLKNNPGVLTTRLATDASQVQ). 2 consecutive transmembrane segments (helical) span residues 870 to 890 (GATG…FVAV) and 891 to 911 (LIAF…FPFL). At 912–979 (ALSGAVQTKM…SYKTAIRKAN (68 aa)) the chain is on the cytoplasmic side. The helical transmembrane segment at 980-1000 (VYGLCYAFSQGISFLANSAAY) threads the bilayer. The Extracellular segment spans residues 1001-1011 (RYGGYLIVYED). Residues 1012–1032 (LNFSYVFRVVSSIAMSATAVG) form a helical membrane-spanning segment. Residues 1033–1321 (RTFSYTPSYA…KLVITGAPIS (289 aa)) lie on the Cytoplasmic side of the membrane. The region spanning 1078-1316 (IDFIDCKFTY…KGAYYKLVIT (239 aa)) is the ABC transporter 2 domain. 1113-1120 (GSSGCGKS) is an ATP binding site. Residue Ser-1321 is modified to Phosphoserine.

It belongs to the ABC transporter superfamily. ABCB family. Multidrug resistance exporter (TC 3.A.1.201) subfamily. Interacts with HAX1. Interacts with the adapter protein complex 2 (AP-2) throught AP2A2 or AP2A1; this interaction regulates cell membrane expression of ABCB11 through its internalization in a clathrin-dependent manner and its subsequent degradation. N-glycosylated. In terms of processing, ubiquitinated; short-chain ubiquitination regulates cell-Surface expression of ABCB11. In terms of tissue distribution, expressed predominantly, if not exclusively in the liver, where it was further localized to the canalicular microvilli and to subcanalicular vesicles of the hepatocytes by in situ.

The protein resides in the apical cell membrane. Its subcellular location is the recycling endosome membrane. The protein localises to the endosome. It is found in the cell membrane. It carries out the reaction cholate(in) + ATP + H2O = cholate(out) + ADP + phosphate + H(+). The enzyme catalyses taurocholate(in) + ATP + H2O = taurocholate(out) + ADP + phosphate + H(+). The catalysed reaction is glycocholate(in) + ATP + H2O = glycocholate(out) + ADP + phosphate + H(+). It catalyses the reaction glycochenodeoxycholate(in) + ATP + H2O = glycochenodeoxycholate(out) + ADP + phosphate + H(+). It carries out the reaction taurochenodeoxycholate(in) + ATP + H2O = taurochenodeoxycholate(out) + ADP + phosphate + H(+). The enzyme catalyses glycoursodeoxycholate(in) + ATP + H2O = glycoursodeoxycholate(out) + ADP + phosphate + H(+). The catalysed reaction is tauroursodeoxycholate(in) + ATP + H2O = tauroursodeoxycholate(out) + ADP + phosphate + H(+). It catalyses the reaction taurodeoxycholate(in) + ATP + H2O = taurodeoxycholate(out) + ADP + phosphate + H(+). It carries out the reaction taurolithocholate 3-sulfate(in) + ATP + H2O = taurolithocholate 3-sulfate(out) + ADP + phosphate + H(+). The enzyme catalyses pravastatin(in) + ATP + H2O = pravastatin(out) + ADP + phosphate + H(+). The uptake of taurocholate is inhibited by taurolithocholate sulfate with an IC(50) of 9 uM. Pravastatin competitively inhibits the transport of taurocholic acid. Cyclosporin A, glibenclamide, rifampicin and troglitazonestrongly competitively inhibit the transport activity of taurocholate. The canalicular transport activity of taurocholate is strongly dependent on canalicular membrane cholesterol content. The uptake of taurocholate is increased by short- and medium-chain fatty acids. Cholesterol increases transport capacity of taurocholate without affecting the affinity for the substrate. Catalyzes the transport of the major hydrophobic bile salts, such as taurine and glycine-conjugated cholic acid across the canalicular membrane of hepatocytes in an ATP-dependent manner, therefore participates in hepatic bile acid homeostasis and consequently to lipid homeostasis through regulation of biliary lipid secretion in a bile salts dependent manner. Transports taurine-conjugated bile salts more rapidly than glycine-conjugated bile salts. Also transports non-bile acid compounds, such as pravastatin and fexofenadine in an ATP-dependent manner and may be involved in their biliary excretion. This is Bile salt export pump from Mus musculus (Mouse).